A 775-amino-acid chain; its full sequence is Tyrosine-protein phosphatase non-receptor type 12 (775 aa).

M1 carries the N-acetylmethionine modification. At S19 the chain carries Phosphoserine. The Tyrosine-protein phosphatase domain maps to 28–293 (FARDFMRLRR…ELVHRAIAQL (266 aa)). Substrate contacts are provided by residues D199, 231-237 (CSAGCGR), and Q278. The active-site Phosphocysteine intermediate is the C231. Residues 322-341 (SSIDSEKQDSPPPKPPRTRS) are disordered. A phosphoserine mark is found at S331, S434, S448, and S467. The tract at residues 344 to 437 (VEGDAKEEIL…KLERNLSFEI (94 aa)) is interaction with TGFB1I1. Residues 462–775 (KIKSASSSVV…GPREPPSEWT (314 aa)) form a disordered region. T519 is modified (phosphothreonine). Residues S550 and S567 each carry the phosphoserine modification. Positions 558 to 573 (NHSQTLKTVSSTPNST) are enriched in polar residues. T569 is subject to Phosphothreonine. Position 596 is a phosphoserine (S596). The residue at position 598 (T598) is a Phosphothreonine. 4 positions are modified to phosphoserine: S603, S606, S608, and S613. Over residues 622–640 (TSISTASATVSPASSAESA) the composition is skewed to low complexity. The residue at position 673 (S673) is a Phosphoserine. Positions 692-711 (VRPEWHELPNQEWSEQRESE) are enriched in basic and acidic residues. Position 748 is a phosphoserine (S748). Positions 766–775 (GPREPPSEWT) are enriched in basic and acidic residues.

Belongs to the protein-tyrosine phosphatase family. Non-receptor class 4 subfamily. In terms of assembly, interacts with PSTPIP1 and TGFB1I1. Interacts with PTK2B/PYK2. Interacts with LPXN. Interacts with SORBS2; this interaction greatly enhances WASF1 dephosphorylation and might mediate partial translocation to focal adhesion sites. Phosphorylated by STK24/MST3 and this results in inhibition of its activity.

It is found in the cytoplasm. The protein localises to the cell junction. It localises to the focal adhesion. Its subcellular location is the cell projection. The protein resides in the podosome. The enzyme catalyses O-phospho-L-tyrosyl-[protein] + H2O = L-tyrosyl-[protein] + phosphate. Functionally, dephosphorylates a range of proteins, and thereby regulates cellular signaling cascades. Dephosphorylates cellular tyrosine kinases, such as ERBB2 and PTK2B/PYK2, and thereby regulates signaling via ERBB2 and PTK2B/PYK2. Selectively dephosphorylates ERBB2 phosphorylated at 'Tyr-1112', 'Tyr-1196', and/or 'Tyr-1248'. The sequence is that of Tyrosine-protein phosphatase non-receptor type 12 (Ptpn12) from Mus musculus (Mouse).